The primary structure comprises 215 residues: uncharacterized protein (215 aa).

This is an uncharacterized protein from Ostreid herpesvirus 1 (isolate France) (OsHV-1).